Reading from the N-terminus, the 398-residue chain is MSNLVLAINAGSSSLKFQLIEIPEEKLVSKGLIERIGLKGSKITVEYDGRKFTDEKEINDHVQAVNIMLDNLIDLGIIRDINDIDGTGHRVVHGGELFPESALVTNNVEKQIESLTELAPLHNPANLMGIRAFRKLLPGIPHVAVFDTSFHQTMPEQAYLYSLPFHYYKDYGIRKYGFHGTSHKYVSQRAAEILGKPIEELRIISCHIGNGASIAAIDGGESVDTSMGFTPLAGVTMGTRSGDIDPALIPYIMEKTGKSAEAVLDILNKESGLLGISGTSSDLRDLEQDAEEGKTRAQLALDVFASRIHKYIGSYAAKMHGVDVVIFTAGVGENSDEVRARVLEGLEFMGVYWDPKKNSQLHGTEGFINYPHSPVKVIVIPTNEEVMIARDAVKFGSL.

Asparagine 9 contacts Mg(2+). ATP is bound at residue lysine 16. Residue arginine 90 participates in substrate binding. Aspartate 147 functions as the Proton donor/acceptor in the catalytic mechanism. ATP is bound by residues 207–211 (HIGNG), 282–284 (DLR), and 330–334 (GVGEN). Residue glutamate 384 participates in Mg(2+) binding.

This sequence belongs to the acetokinase family. Homodimer. The cofactor is Mg(2+). It depends on Mn(2+) as a cofactor.

The protein resides in the cytoplasm. The enzyme catalyses acetate + ATP = acetyl phosphate + ADP. It functions in the pathway metabolic intermediate biosynthesis; acetyl-CoA biosynthesis; acetyl-CoA from acetate: step 1/2. Functionally, catalyzes the formation of acetyl phosphate from acetate and ATP. Can also catalyze the reverse reaction. This is Acetate kinase from Staphylococcus carnosus (strain TM300).